The chain runs to 475 residues: Aspartyl/glutamyl-tRNA(Asn/Gln) amidotransferase subunit B (475 aa).

The protein belongs to the GatB/GatE family. GatB subfamily. Heterotrimer of A, B and C subunits.

The enzyme catalyses L-glutamyl-tRNA(Gln) + L-glutamine + ATP + H2O = L-glutaminyl-tRNA(Gln) + L-glutamate + ADP + phosphate + H(+). The catalysed reaction is L-aspartyl-tRNA(Asn) + L-glutamine + ATP + H2O = L-asparaginyl-tRNA(Asn) + L-glutamate + ADP + phosphate + 2 H(+). Its function is as follows. Allows the formation of correctly charged Asn-tRNA(Asn) or Gln-tRNA(Gln) through the transamidation of misacylated Asp-tRNA(Asn) or Glu-tRNA(Gln) in organisms which lack either or both of asparaginyl-tRNA or glutaminyl-tRNA synthetases. The reaction takes place in the presence of glutamine and ATP through an activated phospho-Asp-tRNA(Asn) or phospho-Glu-tRNA(Gln). The protein is Aspartyl/glutamyl-tRNA(Asn/Gln) amidotransferase subunit B of Staphylococcus haemolyticus (strain JCSC1435).